A 151-amino-acid chain; its full sequence is UPF0178 protein Desal_2673 (151 aa).

The protein belongs to the UPF0178 family.

The sequence is that of UPF0178 protein Desal_2673 from Maridesulfovibrio salexigens (strain ATCC 14822 / DSM 2638 / NCIMB 8403 / VKM B-1763) (Desulfovibrio salexigens).